The primary structure comprises 326 residues: MWRSRWDASVLKAEALALLPCGLGMAFSQSHVMAARRHQHSRLIIEVDEYSSNPTQAFTFYNINQGRFQPPHVQMVDPVPHDAPKPPGYTRFVCVSDTHSRTDPIQMPYGDVLIHAGDFTELGLPSEVKKFNEWLGSLPYEYKIVIAGNHELTFDQEFMADLIKQDFYYFPSVSKLKPENYENVQSLLTNCIYLQDSEVTVRGFRIYGSPWQPWFYGWGFNLPRGQALLEKWNLIPEGVDILITHGPPLGFLDWVPKKMQRVGCVELLNTVQRRVQPRLHVFGHIHEGYGVMADGTTTYVNASVCTVNYQPVNPPIVIDLPTPRNS.

This sequence belongs to the UPF0046 family. In terms of tissue distribution, expressed predominantly in adult brain.

May have metallophosphoesterase activity (in vitro). This is Metallophosphoesterase domain-containing protein 1 (MPPED1) from Homo sapiens (Human).